The following is an 86-amino-acid chain: Cell division topological specificity factor (86 aa).

It belongs to the MinE family.

In terms of biological role, prevents the cell division inhibition by proteins MinC and MinD at internal division sites while permitting inhibition at polar sites. This ensures cell division at the proper site by restricting the formation of a division septum at the midpoint of the long axis of the cell. The protein is Cell division topological specificity factor of Parasynechococcus marenigrum (strain WH8102).